Consider the following 341-residue polypeptide: Cysteine-rich with EGF-like domain protein 2 (341 aa).

A signal peptide spans 1 to 24; the sequence is MLLSCSIFRLFCIILLLQLGSIYT. In terms of domain architecture, EGF-like spans 136–178; the sequence is DCNTCIGGADRPCHGNGKCDGDGTRAGNGKCSCDEGYDGEFCL. Disulfide bonds link cysteine 140–cysteine 154, cysteine 148–cysteine 166, and cysteine 168–cysteine 177. Residue asparagine 190 is glycosylated (N-linked (GlcNAc...) asparagine). FU repeat units follow at residues 193 to 248 and 254 to 308; these read FFLC…DQYC and SFSC…NQHC. The EGF-like 2; calcium-binding; truncated domain maps to 291-317; it reads DIDECTEDPASCSDNQHCLNTDGSFSC.

This sequence belongs to the CRELD family.

It is found in the secreted. Its subcellular location is the endoplasmic reticulum. Functionally, possible role in neuronal acetylcholine receptor transport. In Danio rerio (Zebrafish), this protein is Cysteine-rich with EGF-like domain protein 2 (creld2).